Here is a 383-residue protein sequence, read N- to C-terminus: Probable L-aspartate decarboxylase (383 aa).

Lys231 carries the post-translational modification N6-(pyridoxal phosphate)lysine.

This sequence belongs to the group II decarboxylase family. MfnA subfamily. It depends on pyridoxal 5'-phosphate as a cofactor.

It catalyses the reaction L-aspartate + H(+) = beta-alanine + CO2. It functions in the pathway cofactor biosynthesis; coenzyme A biosynthesis. Its function is as follows. Catalyzes the decarboxylation of L-aspartate to produce beta-alanine. This chain is Probable L-aspartate decarboxylase, found in Thermococcus gammatolerans (strain DSM 15229 / JCM 11827 / EJ3).